Reading from the N-terminus, the 226-residue chain is PKHD-type hydroxylase TERTU_2553 (226 aa).

Residues 78–177 (KIYPPKFNCY…RVASFIWIQS (100 aa)) form the Fe2OG dioxygenase domain. Fe cation-binding residues include H96, D98, and H158. R168 is a binding site for 2-oxoglutarate.

It depends on Fe(2+) as a cofactor. L-ascorbate serves as cofactor.

This chain is PKHD-type hydroxylase TERTU_2553, found in Teredinibacter turnerae (strain ATCC 39867 / T7901).